The sequence spans 90 residues: MADQLLRKKRRIFIHSVGAGTINALLDCLLEDEVISQEDMNKVRDENDTVMDKARVLIDLVTGKGPKSCCKFIKHLCEEDPQLASKMGLH.

One can recognise a CARD domain in the interval 1–90; that stretch reads MADQLLRKKR…PQLASKMGLH (90 aa).

In terms of assembly, interacts with pro-CASP1. Interacts with CARD8. In terms of tissue distribution, primarily expressed in the heart and placenta.

Functionally, inhibits generation of IL-1-beta by interacting with caspase-1 and preventing its association with RIP2. Down-regulates the release of IL1B. In Homo sapiens (Human), this protein is Caspase recruitment domain-containing protein 18 (CARD18).